A 680-amino-acid chain; its full sequence is MAAAVAGPLAAGGEEAAASVSLPGSPGLPGSRSAERALEEAVATGTLNLSNRRLKHFPRGAARSYDLSDITQADLSRNRFPEVPEAACQLVSLEGLSLYHNCLKCLNPALGNLTALTYLNLSRNQLSSLPPYICQLPLRVLIISNNKLGALPPDISTLGSLRQLDVSSNELQSLPVELCSLRSLRDLNVRRNQLSTLPDELGDLPLVRLDFSCNRISRIPVSFCRLRHLQVVLLDSNPLQSPPAQICLKGKLHIFKYLTMEAGRRGAALGDLVPSRPPSFSPCPAEDLFPGRRYDGGLDSGFHSVDSGSKRWSGNESTDDFSELSFRISELARDPRGPRQPREDGAGDGDLEQIDFIDSHVPGEDEDRSAAEEQLPSELSLVAGDVEKPSSSRREEPAGEERRRPDTLQLWQERERKQQQQSGGWGSPRKDSVLKRGIRAAGAGASAPSTQATCNGPPKSSTTQLGVSGGQGAPTPPPTSQDPLPVSGPVTAPVPRPLGSIQRPNSFLFRSSSQSGSSPSSPESVLRPRPFPQEKELISQLRQVLESRLQQPLPEDLAEALANGVLLCQLANQLRPRSVPFIHVPSPAVPKLSALKSRKNVESFLEACRKMGVPEADLCSPSDLLRGTAQGLQTVLEAVILVGGKAPLPVQPSSGLGGFLLFYVVFMLLLYVVYTRLLGS.

Residues 1-22 (MAAAVAGPLAAGGEEAAASVSL) are compositionally biased toward low complexity. The interval 1 to 35 (MAAAVAGPLAAGGEEAAASVSLPGSPGLPGSRSAE) is disordered. LRR repeat units follow at residues 41–64 (AVAT…AARS), 67–90 (LSDI…ACQL), 92–113 (SLEG…LGNL), 114–136 (TALT…ICQL), 138–158 (LRVL…ISTL), 159–181 (GSLR…LCSL), 182–204 (RSLR…LGDL), 206–226 (LVRL…FCRL), and 227–250 (RHLQ…CLKG). Ser-279, Ser-281, Ser-304, Ser-307, Ser-309, and Ser-313 each carry phosphoserine. Residues 329 to 528 (SELARDPRGP…PSSPESVLRP (200 aa)) form a disordered region. Positions 330–345 (ELARDPRGPRQPREDG) are enriched in basic and acidic residues. Acidic residues predominate over residues 346–355 (AGDGDLEQID). Composition is skewed to basic and acidic residues over residues 357–371 (IDSH…RSAA) and 385–418 (DVEK…ERKQ). Position 432 is a phosphoserine (Ser-432). 2 stretches are compositionally biased toward low complexity: residues 440-453 (AAGA…TQAT) and 510-528 (RSSS…VLRP). Ser-511, Ser-513, Ser-517, Ser-521, and Ser-586 each carry phosphoserine. The Calponin-homology (CH) domain maps to 531-644 (FPQEKELISQ…VLEAVILVGG (114 aa)). The chain crosses the membrane as a helical span at residues 655–675 (GLGGFLLFYVVFMLLLYVVYT).

In terms of tissue distribution, widely expressed across tissues, with the most abundant expression in spleen, testes, thymus, intestine, and blood. Expressed in macrophages.

The protein resides in the cell membrane. Its function is as follows. Accessory protein that regulates signaling by multiple TLRs, acting as a broad-spanning regulator of the innate immune response. In macrophages, binds LPS and promotes proper docking of LPS in lipid raft membrane. May be required for lipid raft maintenance. In Mus musculus (Mouse), this protein is Leucine-rich repeat and calponin homology domain-containing protein 4 (Lrch4).